Here is a 236-residue protein sequence, read N- to C-terminus: Small ribosomal subunit protein eS6 (236 aa).

Serine 232 and serine 233 each carry phosphoserine.

Belongs to the eukaryotic ribosomal protein eS6 family. Post-translationally, phosphorylated.

The polypeptide is Small ribosomal subunit protein eS6 (RPS6) (Debaryomyces hansenii (strain ATCC 36239 / CBS 767 / BCRC 21394 / JCM 1990 / NBRC 0083 / IGC 2968) (Yeast)).